We begin with the raw amino-acid sequence, 311 residues long: Probable mitochondrial phosphate carrier protein (311 aa).

Topologically, residues 1-23 (MSTPLIPPAPPKKTLQLYTPQYY) are mitochondrial intermembrane. Solcar repeat units follow at residues 21–105 (QYYG…FKHK), 118–203 (YRTS…IVEA), and 219–303 (EKIG…FKIM). A helical transmembrane segment spans residues 24–44 (GLCTLGGLLACGTTHSAITPL). Over 45 to 67 (DLIKCRKQVNPNIYPGNIAGFKT) the chain is Mitochondrial matrix. Residues 68–88 (ILSKEGLRGLYTGGMPTLIGY) form a helical membrane-spanning segment. Over 89–120 (SLQGCGKYGFYELFKHKYSTLVGAQKAHEYRT) the chain is Mitochondrial intermembrane. The chain crosses the membrane as a helical span at residues 121–141 (SIYLAASASAELLADIMLCPM). Over 142 to 171 (EAIKVRVQTSNPRFANTTREAWSKIVTNEG) the chain is Mitochondrial matrix. A helical membrane pass occupies residues 172-192 (FGTLYRGLAPLWFRQIPYTMM). At 193 to 220 (KFASFERIVEALYTYIGKPKNMYSKAEK) the chain is on the mitochondrial intermembrane side. Residues 221–241 (IGISFAGGYMAGVLCAIISHP) form a helical membrane-spanning segment. Residues 242–269 (ADVMVSKLNSNKKAGEGAGAAAARIYKE) lie on the Mitochondrial matrix side of the membrane. A helical membrane pass occupies residues 270–290 (IGFSGLWNGLGVRIVMIGTLT). At 291–311 (GAQWLIYDSFKIMCGFPATGA) the chain is on the mitochondrial intermembrane side.

Belongs to the mitochondrial carrier (TC 2.A.29) family.

Its subcellular location is the mitochondrion inner membrane. Its function is as follows. Transport of phosphate groups from the cytosol to the mitochondrial matrix. The polypeptide is Probable mitochondrial phosphate carrier protein (Schizosaccharomyces pombe (strain 972 / ATCC 24843) (Fission yeast)).